Consider the following 1486-residue polypeptide: MSDRLGQITQGKDGKSKYSTLSLFDKYKGRSVGAVRSSVIPRHGLQSLGKVATARRMPPPANLPSLKSENKGNDPNIVIVPKDGTGWANKQDQQDPKSSSVTASQPPESQPQPGLQKSVSNLQKPTQSISQENTNSVPGGPKSWAQLSGKPVGHEGGLRGSSRLLSFSPEEFPTLKAAGGQDKAGKEKGALDLSYGPGPSLRPQNVTSWREGGGRNIISAASLSASPTELGSRNASGADGAPSLACTSDSKEPSLRPAQPSRRGASQFMGHGYQPPTYHDMLPAFMCSPQSSENQTTVERSSFPLPQLRLEPRVPFRQFQMNDQDGKERPGVARPVRPLRQLVERAPRPTIINAENLKGLDDLDTDADDGWAGLHEEVDYSEKLKFSDDEDEEDVVKDGRSKWNNWDPRRQRALSLSSADSTDAKRTQEEGKDWSGTAGGSRVIRKVPEPQPPSRKLHSWASGPDYQKPTMGSMFRQHSAEDKEDKPPPRQKFIQSEMSEAVERARKRREEEERRAREERLAACAAKLKQLDQKCRQAQKANETPKPVEKEVPRSPGIEKVSPPENGPVVRKGSPEFPVQEAPTMFLEETPATSPTVAQSNSSSSSSSSSSIEEEVRESGSPAQEFSKYQKSLPPRFQRQQQQQQQQQQQQQQQEQLYKMQHWQPVYPPPSHPQRTFYPHHPQMLGFDPRWMMMPSYMDPRITPTRTPVDFYPSALHPSGLMKPMMPQESLSGTGCRSEDQNCVPSLQERKVTALDPAPVWSPEGYMALQNKGYSLPHPKSADTLAMGMHVRSPDEALPGGLGSHSPYALERTTHASSDGPETPSKKSEREVSLPTQRASEQEEARKQFDLGYGNALIDNCASSPGEENEASSVVGEGFIEVLTKKQRRLLEEERRKKEQAAQVPVKGRGLSSRIPPRFAKKQNGLCLEQDVTVPGSSLGTEIWENSSQALPVQGAASDSWRTAVTAFSSTEPGTSEQGFKSSQGDSGVDLSAESRESSATSSQRSSPYGTLKPEEISGPGLAESKADSHKDQAQKQAEHKDSEQGSAQSKEHRPGPIGNERSLKNRKGSEGAERLPGAVVPPVNGVEIHVDSVLPVPPIEFGVSPKDSDFSLPPGSVSGPVGNPVAKLQDVLASNAGLTQSIPILRRDHHMQRAIGLSPMSFPTADLTLKMESARKAWENSPSLPEQSSPGGAGSGIQPPSSVGASNGVNYSSFGGVSMPPMPVASVAPSASIPGSHLPPLYLDGHVFASQPRLVPQTIPQQQSYQQAATAQQIPISLHTSLQAQAQLGLRGGLPVSQSQEIFSSLQPFRSQVYMHPSLSPPSTMILSGGTALKPPYSAFPGIQPLEMVKPQSGSPYQPMSGNQALVYEGQLGQAAGLGTSQMLDSQLPQLTMPLPRYGSGQQPLILPQSIQLPPGQSLSVGAPRRVPPPGSQPPVLNTSRESAPMELKGFHFADSKQNVPTGGSAPSPQAYRQSEWMKNPAWEP.

Disordered stretches follow at residues 1–20 (MSDR…KYST), 39–306 (VIPR…FPLP), 320–341 (QMND…PLRQ), 385–519 (KFSD…AREE), and 531–658 (LDQK…EQLY). Positions 88-137 (ANKQDQQDPKSSSVTASQPPESQPQPGLQKSVSNLQKPTQSISQENTNSV) are enriched in polar residues. A phosphoserine mark is found at serine 166, serine 168, serine 222, and serine 226. A compositionally biased stretch (polar residues) spans 219–235 (SAASLSASPTELGSRNA). Threonine 228 bears the Phosphothreonine mark. Lysine 251 participates in a covalent cross-link: Glycyl lysine isopeptide (Lys-Gly) (interchain with G-Cter in SUMO2). Positions 288–300 (SPQSSENQTTVER) are enriched in polar residues. Serine 387 and serine 415 each carry phosphoserine. Composition is skewed to basic and acidic residues over residues 422–433 (TDAKRTQEEGKD), 478–488 (HSAEDKEDKPP), and 501–519 (AVER…AREE). Residue serine 479 is modified to Phosphoserine. Positions 494–544 (IQSEMSEAVERARKRREEEERRAREERLAACAAKLKQLDQKCRQAQKANET) form a coiled coil. Serine 555 is subject to Phosphoserine. Low complexity predominate over residues 600-611 (SNSSSSSSSSSS). Serine 621 bears the Phosphoserine mark. Positions 638 to 656 (QRQQQQQQQQQQQQQQQEQ) are enriched in low complexity. Lysine 751 participates in a covalent cross-link: Glycyl lysine isopeptide (Lys-Gly) (interchain with G-Cter in SUMO2). Phosphothreonine is present on threonine 753. Phosphoserine occurs at positions 762 and 793. Disordered stretches follow at residues 792–847 (RSPD…EARK), 893–918 (EERR…IPPR), and 950–1080 (ALPV…PGAV). Residues 880–904 (IEVLTKKQRRLLEEERRKKEQAAQV) adopt a coiled-coil conformation. Residues 960–986 (SWRTAVTAFSSTEPGTSEQGFKSSQGD) show a composition bias toward polar residues. Over residues 998-1007 (SSATSSQRSS) the composition is skewed to low complexity. 2 stretches are compositionally biased toward basic and acidic residues: residues 1025–1055 (SKAD…EHRP) and 1062–1074 (RSLK…EGAE). Phosphoserine occurs at positions 1070 and 1159. 3 disordered regions span residues 1177–1205 (KAWE…SSVG), 1410–1443 (QSIQ…TSRE), and 1455–1486 (ADSK…AWEP). Polar residues predominate over residues 1181–1191 (NSPSLPEQSSP). A compositionally biased stretch (low complexity) spans 1410–1421 (QSIQLPPGQSLS). The span at 1457–1474 (SKQNVPTGGSAPSPQAYR) shows a compositional bias: polar residues.

This Mus musculus (Mouse) protein is Protein PRRC2B (Prrc2b).